The following is a 414-amino-acid chain: Tyrosine--tRNA ligase (414 aa).

Y38 serves as a coordination point for L-tyrosine. The 'HIGH' region motif lies at 43 to 52; it reads PTAISLHLGN. Y165 and Q169 together coordinate L-tyrosine. Positions 227 to 231 match the 'KMSKS' region motif; that stretch reads KIGKS. An ATP-binding site is contributed by K230. In terms of domain architecture, S4 RNA-binding spans 349-413; it reads DDLFLTLVDS…KGKKQYWVIY (65 aa).

This sequence belongs to the class-I aminoacyl-tRNA synthetase family. TyrS type 1 subfamily. In terms of assembly, homodimer.

The protein localises to the cytoplasm. It catalyses the reaction tRNA(Tyr) + L-tyrosine + ATP = L-tyrosyl-tRNA(Tyr) + AMP + diphosphate + H(+). Functionally, catalyzes the attachment of tyrosine to tRNA(Tyr) in a two-step reaction: tyrosine is first activated by ATP to form Tyr-AMP and then transferred to the acceptor end of tRNA(Tyr). This Mycoplasmopsis pulmonis (strain UAB CTIP) (Mycoplasma pulmonis) protein is Tyrosine--tRNA ligase.